The primary structure comprises 131 residues: Small ribosomal subunit protein uS8 (131 aa).

Belongs to the universal ribosomal protein uS8 family. As to quaternary structure, part of the 30S ribosomal subunit. Contacts proteins S5 and S12.

One of the primary rRNA binding proteins, it binds directly to 16S rRNA central domain where it helps coordinate assembly of the platform of the 30S subunit. The protein is Small ribosomal subunit protein uS8 of Nitrosomonas eutropha (strain DSM 101675 / C91 / Nm57).